We begin with the raw amino-acid sequence, 293 residues long: MGKKRSREEAQKEVVQNDPTVDKMDEDSDSSDSDEDMDIINVDFELFNYDKDIDFHGVKTLLRQLFDADAQLFDLSGLSDMIIEQNTIGSTCKVDDKANDAYAFLTVLNAWEHREKKPVAQLIEYLSDKAVKAGDSSLSVLPELFTSGKAQVGIVLSERLINMPAEVIPPMWNMMIEEIQDAVDDKEPYEFTHYLVVSRAYVEVESSLDQEEQKRKRLRDEKGLQYFHPEDEEMRKHAVGAGTYTFTKEGDSADSKRAFQELGVKSQGFMMLIEAGRFKQAVKAIGDCIGAAN.

The segment covering 1–12 (MGKKRSREEAQK) has biased composition (basic and acidic residues). The tract at residues 1–35 (MGKKRSREEAQKEVVQNDPTVDKMDEDSDSSDSDE) is disordered. Over residues 24-35 (MDEDSDSSDSDE) the composition is skewed to acidic residues.

Belongs to the BCP1 family.

The protein localises to the cytoplasm. Its subcellular location is the nucleus. In terms of biological role, involved in nuclear export, actin cytoskeleton organization and vesicular transport. The sequence is that of Protein bcp-1 (bcp-1) from Neurospora crassa (strain ATCC 24698 / 74-OR23-1A / CBS 708.71 / DSM 1257 / FGSC 987).